Here is a 359-residue protein sequence, read N- to C-terminus: MAYNKKRFTSSRKLDHLRICAEEEVESGDAGFGDVRLVHHALPECDMRSIDLSTRFLGHTLSSPLFVSAMTGGHPGTKDANARLARIAERFGLGMGVGSQRAALENPALADTFSVVRDEAPHAFLVANLGAVQLREHGAAWAGQAIEMIGANAIAIHLNFLQEAIQPEGDLSATGCIAAIADLCAETKIPVIVKETGCGISREVARLCWSAGAAAIDIGGWGGTSWAAVESFRADRKDAQGRALKTLGEDFAGWGIPTVVSLAEVAGTGSPVIASGGIRSGIDMAKCLALGADLCGMALPLLKPALESDEALAARVETIHRELVASMFLCGAARIRDMRRARLFITGRTRQMMDDGNPA.

12-13 provides a ligand contact to substrate; sequence RK. FMN is bound by residues Ser-68, 69-71, Ser-99, and Asn-128; that span reads AMT. A substrate-binding site is contributed by 99–101; that stretch reads SQR. Gln-162 contributes to the substrate binding site. Position 163 (Glu-163) interacts with Mg(2+). FMN is bound by residues Lys-194, Thr-224, 277 to 279, and 298 to 299; these read GIR and AL.

This sequence belongs to the IPP isomerase type 2 family. Homooctamer. Dimer of tetramers. Requires FMN as cofactor. It depends on NADPH as a cofactor. Mg(2+) serves as cofactor.

The protein localises to the cytoplasm. The catalysed reaction is isopentenyl diphosphate = dimethylallyl diphosphate. Involved in the biosynthesis of isoprenoids. Catalyzes the 1,3-allylic rearrangement of the homoallylic substrate isopentenyl (IPP) to its allylic isomer, dimethylallyl diphosphate (DMAPP). The chain is Isopentenyl-diphosphate delta-isomerase from Methanoregula boonei (strain DSM 21154 / JCM 14090 / 6A8).